A 337-amino-acid polypeptide reads, in one-letter code: Phenylalanine--tRNA ligase alpha subunit (337 aa).

Glutamate 258 provides a ligand contact to Mg(2+).

This sequence belongs to the class-II aminoacyl-tRNA synthetase family. Phe-tRNA synthetase alpha subunit type 1 subfamily. Tetramer of two alpha and two beta subunits. Mg(2+) serves as cofactor.

Its subcellular location is the cytoplasm. It carries out the reaction tRNA(Phe) + L-phenylalanine + ATP = L-phenylalanyl-tRNA(Phe) + AMP + diphosphate + H(+). The protein is Phenylalanine--tRNA ligase alpha subunit of Burkholderia thailandensis (strain ATCC 700388 / DSM 13276 / CCUG 48851 / CIP 106301 / E264).